The following is a 206-amino-acid chain: dITP/XTP pyrophosphatase (206 aa).

7 to 12 (SNNAKK) lines the substrate pocket. The active-site Proton acceptor is the D72. D72 contacts Mg(2+). Substrate is bound by residues S73, 155–158 (FGYD), K182, and 187–188 (HR).

This sequence belongs to the HAM1 NTPase family. As to quaternary structure, homodimer. Mg(2+) serves as cofactor.

It carries out the reaction XTP + H2O = XMP + diphosphate + H(+). The enzyme catalyses dITP + H2O = dIMP + diphosphate + H(+). The catalysed reaction is ITP + H2O = IMP + diphosphate + H(+). In terms of biological role, pyrophosphatase that catalyzes the hydrolysis of nucleoside triphosphates to their monophosphate derivatives, with a high preference for the non-canonical purine nucleotides XTP (xanthosine triphosphate), dITP (deoxyinosine triphosphate) and ITP. Seems to function as a house-cleaning enzyme that removes non-canonical purine nucleotides from the nucleotide pool, thus preventing their incorporation into DNA/RNA and avoiding chromosomal lesions. The sequence is that of dITP/XTP pyrophosphatase from Corynebacterium glutamicum (strain ATCC 13032 / DSM 20300 / JCM 1318 / BCRC 11384 / CCUG 27702 / LMG 3730 / NBRC 12168 / NCIMB 10025 / NRRL B-2784 / 534).